Here is an 884-residue protein sequence, read N- to C-terminus: Receptor-like protein 39 (884 aa).

The first 24 residues, Met1–Ser24, serve as a signal peptide directing secretion. Residues Phe25–Lys847 lie on the Extracellular side of the membrane. N-linked (GlcNAc...) asparagine glycans are attached at residues Asn59, Asn71, and Asn92. 10 LRR repeats span residues Phe98–Met122, Asn124–Asn146, Leu147–Leu170, Arg171–Leu196, His197–Lys223, Glu225–Leu245, Thr246–Leu268, Thr269–Met292, Phe294–Ser318, and Leu320–Leu344. N-linked (GlcNAc...) asparagine glycosylation occurs at Asn146. Residues Asn190, Asn208, Asn244, and Asn267 are each glycosylated (N-linked (GlcNAc...) asparagine). N-linked (GlcNAc...) asparagine glycosylation is found at Asn304 and Asn313. Residues Lys345–Ser365 form an LRR 11; degenerate repeat. N-linked (GlcNAc...) asparagine glycosylation is present at Asn353. LRR repeat units follow at residues Leu366–Pro391, Ser392–Thr413, Leu414–Leu438, Arg440–Asn463, and Ser464–Val487. Asn403 carries an N-linked (GlcNAc...) asparagine glycan. The N-linked (GlcNAc...) asparagine glycan is linked to Asn463. An LRR 17; degenerate repeat occupies Asn488–Ser507. LRR repeat units follow at residues Arg508 to Pro529, Ser530 to Asp553, Ala554 to Cys577, Ala579 to Leu601, Pro602 to Ser625, Phe628 to Asn652, Ser702 to Leu725, Lys726 to Leu749, Lys750 to Leu773, and Phe775 to Gly798. Residue Asn520 is glycosylated (N-linked (GlcNAc...) asparagine). N-linked (GlcNAc...) asparagine glycosylation is present at Asn576. Residue Asn732 is glycosylated (N-linked (GlcNAc...) asparagine). A glycan (N-linked (GlcNAc...) asparagine) is linked at Asn780. Residues Gly848–Ala868 form a helical membrane-spanning segment. The Cytoplasmic segment spans residues Ser869–His884.

This sequence belongs to the RLP family.

The protein localises to the cell membrane. The sequence is that of Receptor-like protein 39 from Arabidopsis thaliana (Mouse-ear cress).